The sequence spans 66 residues: Large ribosomal subunit protein bL35 (66 aa).

The span at 1–16 shows a compositional bias: basic residues; sequence MPKQKTHRASAKRFKR. Positions 1–21 are disordered; the sequence is MPKQKTHRASAKRFKRTGNGG.

This sequence belongs to the bacterial ribosomal protein bL35 family.

The protein is Large ribosomal subunit protein bL35 of Lactococcus lactis subsp. cremoris (strain MG1363).